A 320-amino-acid polypeptide reads, in one-letter code: Beta-ketoacyl-[acyl-carrier-protein] synthase III (320 aa).

Residues C114 and H247 contribute to the active site. An ACP-binding region spans residues Q248–R252. N277 is an active-site residue.

Belongs to the thiolase-like superfamily. FabH family. As to quaternary structure, homodimer.

Its subcellular location is the cytoplasm. It carries out the reaction malonyl-[ACP] + acetyl-CoA + H(+) = 3-oxobutanoyl-[ACP] + CO2 + CoA. It participates in lipid metabolism; fatty acid biosynthesis. Catalyzes the condensation reaction of fatty acid synthesis by the addition to an acyl acceptor of two carbons from malonyl-ACP. Catalyzes the first condensation reaction which initiates fatty acid synthesis and may therefore play a role in governing the total rate of fatty acid production. Possesses both acetoacetyl-ACP synthase and acetyl transacylase activities. Its substrate specificity determines the biosynthesis of branched-chain and/or straight-chain of fatty acids. In Neisseria meningitidis serogroup C (strain 053442), this protein is Beta-ketoacyl-[acyl-carrier-protein] synthase III.